The primary structure comprises 566 residues: O-fucosyltransferase 36 (566 aa).

Residues 1 to 14 (MERNSSDDEEDHQH) show a composition bias toward basic and acidic residues. The segment at 1–37 (MERNSSDDEEDHQHLIPQNDTRIRHREDSVSSNATTI) is disordered. Residues 66–86 (YVIVFVSLIISIGLLFLLTDP) form a helical; Signal-anchor for type II membrane protein membrane-spanning segment. N-linked (GlcNAc...) asparagine glycans are attached at residues N93, N129, N138, N179, and N190. Residues 415-417 (HFR) and 531-532 (TF) contribute to the substrate site.

It belongs to the glycosyltransferase GT106 family.

It localises to the membrane. The protein operates within glycan metabolism. This Arabidopsis thaliana (Mouse-ear cress) protein is O-fucosyltransferase 36.